We begin with the raw amino-acid sequence, 74 residues long: Putative sulfur carrier protein NMA0882 (74 aa).

The active-site Cysteine persulfide intermediate is Cys13.

It belongs to the sulfur carrier protein TusA family.

The protein is Putative sulfur carrier protein NMA0882 of Neisseria meningitidis serogroup A / serotype 4A (strain DSM 15465 / Z2491).